A 445-amino-acid chain; its full sequence is Glutamyl-tRNA(Gln) amidotransferase subunit D (445 aa).

The 333-residue stretch at 93 to 425 (SEIKIISTGG…EKIRSLMISN (333 aa)) folds into the Asparaginase/glutaminase domain. Catalysis depends on residues Thr103, Thr179, Asp180, and Lys258.

The protein belongs to the asparaginase 1 family. GatD subfamily. In terms of assembly, heterodimer of GatD and GatE.

The enzyme catalyses L-glutamyl-tRNA(Gln) + L-glutamine + ATP + H2O = L-glutaminyl-tRNA(Gln) + L-glutamate + ADP + phosphate + H(+). Its function is as follows. Allows the formation of correctly charged Gln-tRNA(Gln) through the transamidation of misacylated Glu-tRNA(Gln) in organisms which lack glutaminyl-tRNA synthetase. The reaction takes place in the presence of glutamine and ATP through an activated gamma-phospho-Glu-tRNA(Gln). The GatDE system is specific for glutamate and does not act on aspartate. The protein is Glutamyl-tRNA(Gln) amidotransferase subunit D of Saccharolobus islandicus (strain Y.N.15.51 / Yellowstone #2) (Sulfolobus islandicus).